The primary structure comprises 675 residues: Acetyl-coenzyme A synthetase 1 (675 aa).

Residues 1-10 (MPESTQQSHL) show a composition bias toward polar residues. Residues 1-32 (MPESTQQSHLSLDHEKMQQPPKGFTERSKTKP) are disordered. CoA contacts are provided by residues 212–215 (RGGK) and threonine 331. ATP is bound by residues 407-409 (GEP), 431-436 (DTYWQT), aspartate 522, and arginine 537. Serine 545 serves as a coordination point for CoA. Position 548 (arginine 548) interacts with ATP. A CoA-binding site is contributed by arginine 609.

Belongs to the ATP-dependent AMP-binding enzyme family.

The catalysed reaction is acetate + ATP + CoA = acetyl-CoA + AMP + diphosphate. The sequence is that of Acetyl-coenzyme A synthetase 1 (ACS1) from Candida albicans (Yeast).